A 147-amino-acid chain; its full sequence is Fluoride-specific ion channel FluC 1 (147 aa).

Helical transmembrane passes span 29–49 (YVYIFIGGALGALLRYLISFL), 61–81 (IANLTGAFVMGLLTALTIAFF), 90–110 (AITTGFLGALTTFSTFQLELI), and 118–138 (FITLLLYAVTSYVFGILLCYV). Na(+) contacts are provided by Gly97 and Thr100.

The protein belongs to the fluoride channel Fluc/FEX (TC 1.A.43) family.

It localises to the cell membrane. The enzyme catalyses fluoride(in) = fluoride(out). With respect to regulation, na(+) is not transported, but it plays an essential structural role and its presence is essential for fluoride channel function. Functionally, fluoride-specific ion channel. Important for reducing fluoride concentration in the cell, thus reducing its toxicity. In Staphylococcus aureus (strain MRSA252), this protein is Fluoride-specific ion channel FluC 1.